The sequence spans 483 residues: ATP-dependent RNA helicase dbp-5 (483 aa).

The segment at 1–47 (MADLASRITKPDEAPAAAPEAAPVSAPASEEPKAPENETSIEESQSN) is disordered. Positions 14–29 (APAAAPEAAPVSAPAS) are enriched in low complexity. Residues 74 to 102 (SSFDELGLPEAVNRGLLAINFKKPSKVQE) carry the Q motif motif. In terms of domain architecture, Helicase ATP-binding spans 107–276 (LMLSDPPRNM…ERFAPNANQM (170 aa)). 120–127 (SQSGTGKT) contacts ATP. The DEAD box signature appears at 223 to 226 (DEAD). The Helicase C-terminal domain occupies 304–455 (ILCKLYGLMT…LIQLNPNDLD (152 aa)).

It belongs to the DEAD box helicase family. DDX19/DBP5 subfamily. As to quaternary structure, associates with the nuclear pore complex.

It is found in the cytoplasm. The protein localises to the nucleus. The protein resides in the nuclear pore complex. Its subcellular location is the nucleus membrane. It carries out the reaction ATP + H2O = ADP + phosphate + H(+). Its function is as follows. ATP-dependent RNA helicase associated with the nuclear pore complex and essential for mRNA export from the nucleus. May participate in a terminal step of mRNA export through the removal of proteins that accompany mRNA through the nucleopore complex. May also be involved in early transcription. In Neurospora crassa (strain ATCC 24698 / 74-OR23-1A / CBS 708.71 / DSM 1257 / FGSC 987), this protein is ATP-dependent RNA helicase dbp-5 (dbp-5).